A 124-amino-acid chain; its full sequence is MATINQLVRKPRAKQVVKSNVPALEACPQKRGVCTRVYTTTPKKPNSALRKVCRVRLTNGFEVTSYIGGEGHNLQEHSVVLIRGGRVKDLPGVRYHTVRGALDCAGVNNRKQGRSKYGVKRPKS.

3-methylthioaspartic acid is present on Asp89.

It belongs to the universal ribosomal protein uS12 family. Part of the 30S ribosomal subunit. Contacts proteins S8 and S17. May interact with IF1 in the 30S initiation complex.

Functionally, with S4 and S5 plays an important role in translational accuracy. In terms of biological role, interacts with and stabilizes bases of the 16S rRNA that are involved in tRNA selection in the A site and with the mRNA backbone. Located at the interface of the 30S and 50S subunits, it traverses the body of the 30S subunit contacting proteins on the other side and probably holding the rRNA structure together. The combined cluster of proteins S8, S12 and S17 appears to hold together the shoulder and platform of the 30S subunit. The sequence is that of Small ribosomal subunit protein uS12 from Vibrio vulnificus (strain CMCP6).